A 1032-amino-acid chain; its full sequence is Connector enhancer of kinase suppressor of ras 2 (1032 aa).

Residues 11 to 76 (WSPSQVVDWM…LEAVDLLCAL (66 aa)) form the SAM domain. S12 is subject to Phosphoserine. The CRIC domain occupies 84 to 178 (NLKTLSHKLN…TIVQQDCTVY (95 aa)). The PDZ domain maps to 215–297 (VIQLANIKPS…GVILTLKKRP (83 aa)). Over residues 324–340 (RSPTSSVATPSSTISTP) the composition is skewed to low complexity. The disordered stretch occupies residues 324–349 (RSPTSSVATPSSTISTPTKRDSSALQ). Positions 332-515 (TPSSTISTPT…PTHYSLLPSL (184 aa)) constitute a DUF1170 domain. A phosphoserine mark is found at S338 and S390. The tract at residues 480 to 509 (EEYMFQRNSKKDTGKKSKKKGDKSTSPTHY) is disordered. Residues 570-669 (RGDCEGWLWK…WLNRINMLTA (100 aa)) form the PH domain. Positions 682-766 (DYWSESDKEE…PIRKTASQRR (85 aa)) are disordered. Phosphotyrosine is present on Y683. Acidic residues predominate over residues 683–693 (YWSESDKEEAD). Residues S685 and S687 each carry the phosphoserine modification. The span at 701–714 (DSPPPPYDTYPRPP) shows a compositional bias: pro residues. The span at 730-740 (LSSTETSQSQS) shows a compositional bias: low complexity. Residues S756 and S767 each carry the phosphoserine modification. The disordered stretch occupies residues 866–900 (DPQDDIQPPEVEEEEEEEEEEAAGENIGEKNENRE). Residues 874–917 (PEVEEEEEEEEEEAAGENIGEKNENREEKLGDSLQDLYRALEEA) adopt a coiled-coil conformation. Residues 875 to 888 (EVEEEEEEEEEEAA) show a composition bias toward acidic residues. S906 carries the post-translational modification Phosphoserine.

It belongs to the CNKSR family. As to quaternary structure, interacts with RAF1, RAB2L and RAL GTPase proteins. Interacts with DLG4 and AIP1. In terms of processing, phosphorylated on tyrosine. As to expression, expressed in neurons and localized in the cell body and neurites.

Its subcellular location is the cytoplasm. The protein localises to the membrane. May function as an adapter protein or regulator of Ras signaling pathways, in synaptic junctions. This chain is Connector enhancer of kinase suppressor of ras 2 (Cnksr2), found in Rattus norvegicus (Rat).